The sequence spans 136 residues: Protein NrdI (136 aa).

The protein belongs to the NrdI family.

Probably involved in ribonucleotide reductase function. The protein is Protein NrdI of Escherichia coli O7:K1 (strain IAI39 / ExPEC).